A 172-amino-acid chain; its full sequence is RNA pyrophosphohydrolase (172 aa).

A Nudix hydrolase domain is found at 6–149 (GYRPNVGIIL…KRDVYRMALK (144 aa)). The Nudix box motif lies at 38 to 59 (GGIKYGESPEQAMYRELMEEVG).

Belongs to the Nudix hydrolase family. RppH subfamily. A divalent metal cation is required as a cofactor.

Its function is as follows. Accelerates the degradation of transcripts by removing pyrophosphate from the 5'-end of triphosphorylated RNA, leading to a more labile monophosphorylated state that can stimulate subsequent ribonuclease cleavage. The protein is RNA pyrophosphohydrolase of Methylobacillus flagellatus (strain ATCC 51484 / DSM 6875 / VKM B-1610 / KT).